A 225-amino-acid chain; its full sequence is uncharacterized protein (225 aa).

The interval 1–48 (MTQLVTRARSARGSTLGEQPRQDQLDFADHTGTAGDGNDGAAAASGPV) is disordered. A compositionally biased stretch (basic and acidic residues) spans 20-29 (PRQDQLDFAD). Positions 64–136 (GYRGPSACQI…LHNIRVAVDH (73 aa)) constitute an HTH merR-type domain. The tract at residues 201-225 (DGGESIAAPEDELASRRKHRDRKIG) is disordered. Residues 216–225 (RRKHRDRKIG) show a composition bias toward basic residues.

This is an uncharacterized protein from Mycobacterium tuberculosis (strain CDC 1551 / Oshkosh).